A 574-amino-acid polypeptide reads, in one-letter code: Sulfate adenylyltransferase (574 aa).

The N-terminal stretch occupies residues methionine 1–tyrosine 169. A catalytic region spans residues aspartate 170–threonine 394. Glutamine 197 is a binding site for sulfate. Residues glutamine 197–asparagine 200 and glycine 291–histidine 294 each bind ATP. Catalysis depends on residues threonine 198, arginine 199, and asparagine 200. Arginine 199 is a sulfate binding site. Alanine 295 contacts sulfate. Valine 333 serves as a coordination point for ATP. The interval glutamine 395–serine 574 is allosteric regulation domain; adenylyl-sulfate kinase-like. 3'-phosphoadenylyl sulfate-binding positions include aspartate 434–arginine 437, arginine 451, isoleucine 477–alanine 478, and arginine 516.

This sequence in the N-terminal section; belongs to the sulfate adenylyltransferase family. It in the C-terminal section; belongs to the APS kinase family. Homohexamer. Dimer of trimers.

The protein resides in the cytoplasm. The enzyme catalyses sulfate + ATP + H(+) = adenosine 5'-phosphosulfate + diphosphate. Its pathway is sulfur metabolism; hydrogen sulfide biosynthesis; sulfite from sulfate: step 1/3. Allosterically inhibited by 3'-phosphoadenosine 5'-phosphosulfate (PAPS). In terms of biological role, catalyzes the first intracellular reaction of sulfate assimilation, forming adenosine-5'-phosphosulfate (APS) from inorganic sulfate and ATP. Plays an important role in sulfate activation as a component of the biosynthesis pathway of sulfur-containing amino acids. This is Sulfate adenylyltransferase from Aspergillus fumigatus (strain ATCC MYA-4609 / CBS 101355 / FGSC A1100 / Af293) (Neosartorya fumigata).